Consider the following 305-residue polypeptide: Serine/threonine-protein kinase 16 (305 aa).

Glycine 2 is lipidated: N-myristoyl glycine. Residues cysteine 6 and cysteine 8 are each lipidated (S-palmitoyl cysteine). In terms of domain architecture, Protein kinase spans 20 to 293; that stretch reads YLFIQKLGEG…PLLLSQLEAL (274 aa). Residues 26 to 34 and lysine 49 each bind ATP; that span reads LGEGGFSYV. Catalysis depends on aspartate 148, which acts as the Proton acceptor. The activation loop stretch occupies residues 166-202; the sequence is DLGSMNQACIHVEGSRQALTLQDWAAQRCTISYRAPE. Residue threonine 185 is modified to Phosphothreonine; by autocatalysis. At serine 197 the chain carries Phosphoserine; by autocatalysis. Tyrosine 198 is modified (phosphotyrosine; by autocatalysis).

The protein belongs to the protein kinase superfamily. Ser/Thr protein kinase family. As to quaternary structure, monomer. Interacts with DRG1 (via its N-terminal); the interaction phosphorylates DRG1. Post-translationally, mainly autophosphorylated on serine/threonine residues. Also autophosphorylated on Tyr-198. It is uncertain whether palmitoylation is on Cys-6 and/or Cys-8. Ubiquitously expressed at very low levels.

The protein localises to the cytoplasm. The protein resides in the perinuclear region. It is found in the membrane. It catalyses the reaction L-seryl-[protein] + ATP = O-phospho-L-seryl-[protein] + ADP + H(+). The enzyme catalyses L-threonyl-[protein] + ATP = O-phospho-L-threonyl-[protein] + ADP + H(+). The catalysed reaction is L-tyrosyl-[protein] + ATP = O-phospho-L-tyrosyl-[protein] + ADP + H(+). Functionally, membrane-associated protein kinase that phosphorylates on serine and threonine residues. In vitro substrates include DRG1, ENO1 and EIF4EBP1. Also autophosphorylates. May be involved in secretory vesicle trafficking or intracellular signaling. May have a role in regulating stromal-epithelial interactions that occur during ductal morphogenesis in the mammary gland. May be involved in TGF-beta signaling. Able to autophosphorylate on Tyr residue; it is however unclear whether it has tyrosine-protein kinase toward other proteins. The sequence is that of Serine/threonine-protein kinase 16 (STK16) from Homo sapiens (Human).